We begin with the raw amino-acid sequence, 306 residues long: Phosphoadenosine phosphosulfate reductase (306 aa).

2 disordered regions span residues methionine 1 to glycine 30 and tyrosine 245 to alanine 266.

The protein belongs to the PAPS reductase family. CysH subfamily.

It carries out the reaction [thioredoxin]-disulfide + sulfite + adenosine 3',5'-bisphosphate + 2 H(+) = [thioredoxin]-dithiol + 3'-phosphoadenylyl sulfate. It functions in the pathway sulfur metabolism; hydrogen sulfide biosynthesis; sulfite from sulfate: step 3/3. In terms of biological role, the NADP dependent reduction of PAPS into sulfite involves thioredoxin which probably plays the role of a thiol carrier. The chain is Phosphoadenosine phosphosulfate reductase (sA) from Emericella nidulans (strain FGSC A4 / ATCC 38163 / CBS 112.46 / NRRL 194 / M139) (Aspergillus nidulans).